The chain runs to 147 residues: MKIIIQRVKKAQVSIEGQIQGKINQGLLLLVGVGPEDQEEDLDYAVRKLVNMRIFSDAEGKMNLSVKDIEGEILSISQFTLFADTKKGNRPAFTGAAKPDMASDFYDAFNQKLAQEVPVQTGIFGADMQVELVNNGPVTIILDTKKR.

The Gly-cisPro motif, important for rejection of L-amino acids motif lies at 136–137 (GP).

It belongs to the DTD family. Homodimer.

The protein localises to the cytoplasm. It catalyses the reaction glycyl-tRNA(Ala) + H2O = tRNA(Ala) + glycine + H(+). The enzyme catalyses a D-aminoacyl-tRNA + H2O = a tRNA + a D-alpha-amino acid + H(+). Its function is as follows. An aminoacyl-tRNA editing enzyme that deacylates mischarged D-aminoacyl-tRNAs. Also deacylates mischarged glycyl-tRNA(Ala), protecting cells against glycine mischarging by AlaRS. Acts via tRNA-based rather than protein-based catalysis; rejects L-amino acids rather than detecting D-amino acids in the active site. By recycling D-aminoacyl-tRNA to D-amino acids and free tRNA molecules, this enzyme counteracts the toxicity associated with the formation of D-aminoacyl-tRNA entities in vivo and helps enforce protein L-homochirality. This Streptococcus pneumoniae serotype 2 (strain D39 / NCTC 7466) protein is D-aminoacyl-tRNA deacylase.